The chain runs to 163 residues: ATP synthase subunit b 1 (163 aa).

Residues 5–25 (FDATFFAFVGLVLFLALVVYL) form a helical membrane-spanning segment.

Belongs to the ATPase B chain family. As to quaternary structure, F-type ATPases have 2 components, F(1) - the catalytic core - and F(0) - the membrane proton channel. F(1) has five subunits: alpha(3), beta(3), gamma(1), delta(1), epsilon(1). F(0) has three main subunits: a(1), b(2) and c(10-14). The alpha and beta chains form an alternating ring which encloses part of the gamma chain. F(1) is attached to F(0) by a central stalk formed by the gamma and epsilon chains, while a peripheral stalk is formed by the delta and b chains.

It is found in the cell inner membrane. Its function is as follows. F(1)F(0) ATP synthase produces ATP from ADP in the presence of a proton or sodium gradient. F-type ATPases consist of two structural domains, F(1) containing the extramembraneous catalytic core and F(0) containing the membrane proton channel, linked together by a central stalk and a peripheral stalk. During catalysis, ATP synthesis in the catalytic domain of F(1) is coupled via a rotary mechanism of the central stalk subunits to proton translocation. In terms of biological role, component of the F(0) channel, it forms part of the peripheral stalk, linking F(1) to F(0). The chain is ATP synthase subunit b 1 from Rhizobium leguminosarum bv. trifolii (strain WSM2304).